The chain runs to 285 residues: Orotidine 5'-phosphate decarboxylase (285 aa).

Residues D40, 62–64 (KTH), 93–102 (DRKFVDIGST), Y235, and R253 contribute to the substrate site. Catalysis depends on K95, which acts as the Proton donor.

Belongs to the OMP decarboxylase family.

The enzyme catalyses orotidine 5'-phosphate + H(+) = UMP + CO2. The protein operates within pyrimidine metabolism; UMP biosynthesis via de novo pathway; UMP from orotate: step 2/2. The chain is Orotidine 5'-phosphate decarboxylase (URA3) from Paracoccidioides brasiliensis.